Reading from the N-terminus, the 430-residue chain is Adenylosuccinate synthetase (430 aa).

Residues 12–18 (GDEGKGK) and 40–42 (GHT) contribute to the GTP site. The active-site Proton acceptor is the D13. Mg(2+) is bound by residues D13 and G40. IMP contacts are provided by residues 13–16 (DEGK), 38–41 (NAGH), T130, R144, Q224, T239, and R303. H41 (proton donor) is an active-site residue. 299–305 (TVTGRKR) lines the substrate pocket. Residues R305, 331 to 333 (KLD), and 413 to 415 (STS) contribute to the GTP site.

The protein belongs to the adenylosuccinate synthetase family. As to quaternary structure, homodimer. The cofactor is Mg(2+).

The protein localises to the cytoplasm. It carries out the reaction IMP + L-aspartate + GTP = N(6)-(1,2-dicarboxyethyl)-AMP + GDP + phosphate + 2 H(+). The protein operates within purine metabolism; AMP biosynthesis via de novo pathway; AMP from IMP: step 1/2. Plays an important role in the de novo pathway of purine nucleotide biosynthesis. Catalyzes the first committed step in the biosynthesis of AMP from IMP. This is Adenylosuccinate synthetase from Methylorubrum extorquens (strain CM4 / NCIMB 13688) (Methylobacterium extorquens).